A 244-amino-acid chain; its full sequence is Orotidine 5'-phosphate decarboxylase (244 aa).

Residues Asp20, Lys42, 70–79 (DLKFFDIPAT), Thr125, Arg186, Gln195, Gly215, and Arg216 each bind substrate. Lys72 acts as the Proton donor in catalysis.

Belongs to the OMP decarboxylase family. Type 1 subfamily. As to quaternary structure, homodimer.

It carries out the reaction orotidine 5'-phosphate + H(+) = UMP + CO2. Its pathway is pyrimidine metabolism; UMP biosynthesis via de novo pathway; UMP from orotate: step 2/2. Catalyzes the decarboxylation of orotidine 5'-monophosphate (OMP) to uridine 5'-monophosphate (UMP). The polypeptide is Orotidine 5'-phosphate decarboxylase (Xylella fastidiosa (strain M12)).